The chain runs to 215 residues: Rho-related GTP-binding protein RhoF (215 aa).

The residue at position 1 (methionine 1) is an N-acetylmethionine. A GTP-binding site is contributed by 30–37; the sequence is GDGGCGKT. The Effector region motif lies at 52–60; the sequence is YAPSVFEKY. GTP-binding positions include 77 to 81 and 135 to 138; these read DTAGQ and CKTD. Cysteine 212 carries the post-translational modification Cysteine methyl ester. The S-geranylgeranyl cysteine moiety is linked to residue cysteine 212. A propeptide spans 213–215 (removed in mature form); it reads LLL.

It belongs to the small GTPase superfamily. Rho family.

Its subcellular location is the cell membrane. It is found in the cytoplasm. The protein resides in the cytoskeleton. Functionally, plasma membrane-associated small GTPase which cycles between an active GTP-bound and an inactive GDP-bound state. Causes the formation of thin, actin-rich surface projections called filopodia. Functions cooperatively with CDC42 and Rac to generate additional structures, increasing the diversity of actin-based morphology. This chain is Rho-related GTP-binding protein RhoF (RHOF), found in Bos taurus (Bovine).